The sequence spans 31 residues: GSIPCAESCVYIPCFTGIAGCSCKNKVCYYN.

The cyclopeptide (Gly-Asn) cross-link spans 1–31 (GSIPCAESCVYIPCFTGIAGCSCKNKVCYYN). Cystine bridges form between Cys-5-Cys-21, Cys-9-Cys-23, and Cys-14-Cys-28.

It belongs to the cyclotide family. Bracelet subfamily. This is a cyclic peptide.

Probably participates in a plant defense mechanism. This Viola cotyledon (Violeta) protein is Cyclotide vico-A.